The following is a 167-amino-acid chain: Leptin (167 aa).

Positions 1–21 (MRCGPLYRFLWLWPYLSYVEA) are cleaved as a signal peptide. A disulfide bond links Cys-117 and Cys-167.

This sequence belongs to the leptin family.

It is found in the secreted. Its function is as follows. Key player in the regulation of energy balance and body weight control. Once released into the circulation, has central and peripheral effects by binding LEPR, found in many tissues, which results in the activation of several major signaling pathways. In the hypothalamus, acts as an appetite-regulating factor that induces a decrease in food intake and an increase in energy consumption by inducing anorexinogenic factors and suppressing orexigenic neuropeptides, also regulates bone mass and secretion of hypothalamo-pituitary-adrenal hormones. In the periphery, increases basal metabolism, influences reproductive function, regulates pancreatic beta-cell function and insulin secretion, is pro-angiogenic for endothelial cell and affects innate and adaptive immunity. In the arcuate nucleus of the hypothalamus, activates by depolarization POMC neurons inducing FOS and SOCS3 expression to release anorexigenic peptides and inhibits by hyperpolarization NPY neurons inducing SOCS3 with a consequent reduction on release of orexigenic peptides. In addition to its known satiety inducing effect, has a modulatory role in nutrient absorption. In the intestine, reduces glucose absorption by enterocytes by activating PKC and leading to a sequential activation of p38, PI3K and ERK signaling pathways which exerts an inhibitory effect on glucose absorption. Acts as a growth factor on certain tissues, through the activation of different signaling pathways increases expression of genes involved in cell cycle regulation such as CCND1, via JAK2-STAT3 pathway, or VEGFA, via MAPK1/3 and PI3K-AKT1 pathways. May also play an apoptotic role via JAK2-STAT3 pathway and up-regulation of BIRC5 expression. Pro-angiogenic, has mitogenic activity on vascular endothelial cells and plays a role in matrix remodeling by regulating the expression of matrix metalloproteinases (MMPs) and tissue inhibitors of metalloproteinases (TIMPs). In innate immunity, modulates the activity and function of neutrophils by increasing chemotaxis and the secretion of oxygen radicals. Increases phagocytosis by macrophages and enhances secretion of pro-inflammatory mediators. Increases cytotoxic ability of NK cells. Plays a pro-inflammatory role, in synergy with IL1B, by inducing NOS2 which promotes the production of IL6, IL8 and Prostaglandin E2, through a signaling pathway that involves JAK2, PI3K, MAP2K1/MEK1 and MAPK14/p38. In adaptive immunity, promotes the switch of memory T-cells towards T helper-1 cell immune responses. Increases CD4(+)CD25(-) T-cell proliferation and reduces autophagy during TCR (T-cell receptor) stimulation, through MTOR signaling pathway activation and BCL2 up-regulation. In Capra hircus (Goat), this protein is Leptin (LEP).